A 430-amino-acid polypeptide reads, in one-letter code: Asparagine--tRNA ligase (430 aa).

It belongs to the class-II aminoacyl-tRNA synthetase family. Homodimer.

The protein resides in the cytoplasm. It catalyses the reaction tRNA(Asn) + L-asparagine + ATP = L-asparaginyl-tRNA(Asn) + AMP + diphosphate + H(+). This is Asparagine--tRNA ligase from Listeria monocytogenes serotype 4b (strain F2365).